Consider the following 143-residue polypeptide: Endoribonuclease YbeY (143 aa).

Zn(2+) is bound by residues His-109, His-113, and His-119.

It belongs to the endoribonuclease YbeY family. The cofactor is Zn(2+).

It localises to the cytoplasm. Functionally, single strand-specific metallo-endoribonuclease involved in late-stage 70S ribosome quality control and in maturation of the 3' terminus of the 16S rRNA. The chain is Endoribonuclease YbeY from Carboxydothermus hydrogenoformans (strain ATCC BAA-161 / DSM 6008 / Z-2901).